We begin with the raw amino-acid sequence, 358 residues long: UDP-N-acetylglucosamine--N-acetylmuramyl-(pentapeptide) pyrophosphoryl-undecaprenol N-acetylglucosamine transferase (358 aa).

UDP-N-acetyl-alpha-D-glucosamine contacts are provided by residues 13–15, arginine 166, serine 196, and glutamine 291; that span reads TAG.

This sequence belongs to the glycosyltransferase 28 family. MurG subfamily.

Its subcellular location is the cell membrane. It carries out the reaction di-trans,octa-cis-undecaprenyl diphospho-N-acetyl-alpha-D-muramoyl-L-alanyl-D-glutamyl-meso-2,6-diaminopimeloyl-D-alanyl-D-alanine + UDP-N-acetyl-alpha-D-glucosamine = di-trans,octa-cis-undecaprenyl diphospho-[N-acetyl-alpha-D-glucosaminyl-(1-&gt;4)]-N-acetyl-alpha-D-muramoyl-L-alanyl-D-glutamyl-meso-2,6-diaminopimeloyl-D-alanyl-D-alanine + UDP + H(+). Its pathway is cell wall biogenesis; peptidoglycan biosynthesis. Cell wall formation. Catalyzes the transfer of a GlcNAc subunit on undecaprenyl-pyrophosphoryl-MurNAc-pentapeptide (lipid intermediate I) to form undecaprenyl-pyrophosphoryl-MurNAc-(pentapeptide)GlcNAc (lipid intermediate II). This is UDP-N-acetylglucosamine--N-acetylmuramyl-(pentapeptide) pyrophosphoryl-undecaprenol N-acetylglucosamine transferase from Clostridium botulinum (strain Alaska E43 / Type E3).